A 415-amino-acid chain; its full sequence is Multidrug resistance protein MdtA (415 aa).

An N-terminal signal peptide occupies residues 1 to 21 (MKSTVKKRGWVIAGIVVVALA). The tract at residues 387 to 415 (AQTAADAAKPERGERAPTDSARAAKGARS) is disordered. Over residues 394-403 (AKPERGERAP) the composition is skewed to basic and acidic residues.

The protein belongs to the membrane fusion protein (MFP) (TC 8.A.1) family. In terms of assembly, part of a tripartite efflux system composed of MdtA, MdtB and MdtC.

It is found in the cell inner membrane. The sequence is that of Multidrug resistance protein MdtA from Cronobacter turicensis (strain DSM 18703 / CCUG 55852 / LMG 23827 / z3032).